A 572-amino-acid chain; its full sequence is Sulfite reductase [NADPH] hemoprotein beta-component (572 aa).

[4Fe-4S] cluster-binding residues include Cys437, Cys443, Cys482, and Cys486. Cys486 serves as a coordination point for siroheme.

It belongs to the nitrite and sulfite reductase 4Fe-4S domain family. As to quaternary structure, alpha(8)-beta(8). The alpha component is a flavoprotein, the beta component is a hemoprotein. Siroheme serves as cofactor. It depends on [4Fe-4S] cluster as a cofactor.

The enzyme catalyses hydrogen sulfide + 3 NADP(+) + 3 H2O = sulfite + 3 NADPH + 4 H(+). Its pathway is sulfur metabolism; hydrogen sulfide biosynthesis; hydrogen sulfide from sulfite (NADPH route): step 1/1. Functionally, component of the sulfite reductase complex that catalyzes the 6-electron reduction of sulfite to sulfide. This is one of several activities required for the biosynthesis of L-cysteine from sulfate. The polypeptide is Sulfite reductase [NADPH] hemoprotein beta-component (Bacillus licheniformis (strain ATCC 14580 / DSM 13 / JCM 2505 / CCUG 7422 / NBRC 12200 / NCIMB 9375 / NCTC 10341 / NRRL NRS-1264 / Gibson 46)).